Reading from the N-terminus, the 571-residue chain is Quinone-dependent D-lactate dehydrogenase (571 aa).

The 230-residue stretch at 44 to 273 (GGGPVFAVVR…FAVRTRTFPR (230 aa)) folds into the FAD-binding PCMH-type domain. FAD is bound by residues 78–82 (ASNTG), 86–87 (GS), G145, S152, G162, and V263.

Belongs to the quinone-dependent D-lactate dehydrogenase family. FAD serves as cofactor.

The protein localises to the cell membrane. It carries out the reaction (R)-lactate + a quinone = a quinol + pyruvate. In terms of biological role, catalyzes the oxidation of D-lactate to pyruvate. Also has weak activity with L-lactate and DL-2-hydroxybutyrate. Electrons derived from D-lactate oxidation enter the electron transport chain. Essential for growth with D-lactate as sole carbon and energy source. The sequence is that of Quinone-dependent D-lactate dehydrogenase from Corynebacterium glutamicum (strain ATCC 13032 / DSM 20300 / JCM 1318 / BCRC 11384 / CCUG 27702 / LMG 3730 / NBRC 12168 / NCIMB 10025 / NRRL B-2784 / 534).